The primary structure comprises 545 residues: Membrane protein insertase YidC (545 aa).

A run of 4 helical transmembrane segments spans residues 350 to 370, 424 to 444, 461 to 481, and 498 to 518; these read IIGNWGWAIIVLTIIVKAVLY, LPMLLQIPVFIGLYWALFASV, ADPYYILPIIMAATMFAQTYL, and PLVFSVMFFFFPAGLVLYWVV.

Belongs to the OXA1/ALB3/YidC family. Type 1 subfamily. In terms of assembly, interacts with the Sec translocase complex via SecD. Specifically interacts with transmembrane segments of nascent integral membrane proteins during membrane integration.

The protein resides in the cell inner membrane. Functionally, required for the insertion and/or proper folding and/or complex formation of integral membrane proteins into the membrane. Involved in integration of membrane proteins that insert both dependently and independently of the Sec translocase complex, as well as at least some lipoproteins. Aids folding of multispanning membrane proteins. The protein is Membrane protein insertase YidC of Neisseria meningitidis serogroup C (strain 053442).